The primary structure comprises 2537 residues: MKPLPSQQPPPKMGDFYDPEHPTPEEEENEAKIENVQKTGFIKGPVFKGVASSRFLPKGTKTKVNLEEQGRQKVSFSFSFTKKTLQNRFLTALSNEKQSDSPNSPAPPLQVDSNPKVKMDAGDTFPATEESSPPKSRVELGRIHFKKHLLHVTSRPQLAASTTAASPLPPTTQLPAVLAESMIDSPPSSPPPPPPPPQASSPSPPAQISEPVALPQPPATALMTSPPGPLPGDVAVRAQKESPVKSGPEVLEVDTKQDIVSNSLEEHTVQTLKEQADHLLQKEDSHIGKEEEVSDGSKISLSSKKASSKKKSSQFEGTFLGSESDEDSVRTSSSQRSHDLKSSTSIDKERDFKKSSAPSKSEDLGKSSRSKTERDDRYCSYSKLERDTRYVSSRCRSERDRRRSRSRSRSDRASRTSLSYSRSERSHYYDSERRYHRSSPYRERTRYSRPYTDNRARESSDSEDEYKKTYPRRTSAHSYRDLRTSSSYSKFDRDCKTETSYLEMERRGKYTSKLERESKRTSEHETIKRCCSPPNELGFRRGSSYSKHDNSTSRYKSALSKSISKNDKFKNSFCCTELNEENKQSHSFSLQTPCSKGSELRTINKISEREKTGSPTPSNQLNDSPTFKKLDESPVLKPEFIGHDGRESIKELELSKVKNDQLRNFCSIELNVNGSPETEADVATFCTSKTDAISMTSDDSVTGSEVSPLIKACMLSSNGFQNVGRCRERDSDDTCRQHNTSKSPFREMEPLLSPHHDKLMSLPVKTIDYPKTLIKEPVDKRHSCCKTKDSDIYCSPNENPEAENAEPSAMTISSHSFVNVHLESKTVICDNREPTDRHSENTCDEYKQSIGSTSSASHNHFDGLYEPIGSSGISSLQSPPSGIRCEENTSPTLDAVESKKGIDFLKYARKETDVGSALPDSGKGFSWENRHNNVLSGQSLQEAQEEGNSILHERRGRPEIPLDEEQRGHTHISDDSEVVFPYDLNLTMEDSDGITYTLKCDSSGNAPEIVSTVHEDYSGSSASSSDESDSEDTESDDSSIPRNRLQSVVVVPKNSTLPMEETSPCSSRSSQSYKHYSDRWEDGLETRRHAYEEEYESKGCSQTEKYFLHKGTERSAESCYSQFGRKADNHLPDIAHAQSDGVDSTSQTDSRSDHLGHLNPEDTLRAKTSRPQELPVYSDDFEDLPNKSRQQMIFSNRPDSSRLGKTELSFSSSCDISRMDGLHSSEELRNLGWDFSQQERPTTTYQQPDSSYGTCGTHKYQQSTEHYGGTHNYWQGNGYWDPRSAGRPPGTGLAYDRIQGQVPDSLTDDREEEEHWDQRSGSHFSSPSNKFFFHQKDKGSVQAPEISSNSIKDALVMNERKDFSKNFEKNDIKERGPPKKRRQELESDSESDGELQARKKVRVEMEQGESSVPQHSELMGPSCAMDDFRDPQRWKEFAKLGKMPCYFDLIEENVYLTERKKNKSHRDIKRMQCECTPLSKDERAQGEVACGEDCLNRLLMIECSSRCPNGDYCSNRRFQRKQHADVEVILTEKKGWGLRAAKDLPSNTFVLEYCGEVLDHKEFKARVKEYARNKNIHYYFMALKNDEIIDATQKGNCSRFMNHSCEPNCETQKWTVNGQLRVGFFTTKLVPSGSELTFDYQFQRYGKEAQKCFCGSANCRGYLGGENRVSIRAAGGKMKKERSRKKDSVDGELEALMENGEGLSDKNQVLSLSRLMVRIETLEQKLTCLKLIQNTHSQSCLKSFLERHGLSLLWIWMAELGDGRESNQKLQEEIIKTLEHLPIPTKNMLEESKVLPIIQRWSQTKTAVPQLSEGDGYSSENTSRAHTPLNTPDPSAKPSTEMDTDTPKKLIFRRLKIISENSMDSAVSDVTSELECKDGKEDLDQLETVTVEEDEELQSQQLLPQQLCESKVESEATIEVSKLPTSEPEADTETEPKDSNGTKLEETIAEETPSQDEEEGVSDVESERSQEPPDKTVDISDLATKLLDSWKDLKEVYRIPKKSQTEKESTVAERGRDAAAFRDQTAPKTPNRSRERDPDKQSQNKEKRKRRGSLSPPSSAYERGTKRPDDRYDTPTSKKKVRIKDRNKLSTEERRKLFEQEVAQREAQKQQQQMQNLGMTSPLPFDSLGYNASHHPFAGYPPGYPMQAYVDPSNPNAGKVLLPTPSMDPVCSPAPYDHAQPLVGHSTESLAAPPSVPVVPHVAASVEVSSSQYVAQNESVVHQDSNVPVMPVQAPGPVQGQNYNVWESNQQSVSVQQQYSPAQSQTTIYYQGQTCSTVYSVTSPYSQTTPPIVQSYAQPSLQYIQGQQIFTAHPQGVVVQPTAAVTSIVAPGQPQSLQPPEMVVTNNLLDLPPPSPPKPKTIVLPPNWKTARDPEGKIYYYHVITRQTQWDPPTWESPGDDASLEHEAEMDLGTPTYDENPMKTSKKPKTAEADTSSELAKKSKEVFRKEMSQFIVQCLNPYRKPDCKVGRITTTEDFKHLARKLTHGVMNKELKYCKNPEDLECNENVKHKTKEYIKKYMQKFGAVYKPKEDTELE.

A compositionally biased stretch (pro residues) spans 1–12; that stretch reads MKPLPSQQPPPK. Disordered stretches follow at residues 1 to 31, 91 to 142, 156 to 483, 510 to 554, and 607 to 629; these read MKPLPSQQPPPKMGDFYDPEHPTPEEEENEA, TALS…ELGR, PQLA…RDLR, YTSK…STSR, and SEREKTGSPTPSNQLNDSPTFKK. The span at 18–31 shows a compositional bias: basic and acidic residues; the sequence is DPEHPTPEEEENEA. The segment covering 91–103 has biased composition (polar residues); sequence TALSNEKQSDSPN. Ser-132 is modified (phosphoserine). A compositionally biased stretch (low complexity) spans 156–166; the sequence is PQLAASTTAAS. Residues 187–205 are compositionally biased toward pro residues; sequence PSSPPPPPPPPQASSPSPP. Residue Ser-242 is modified to Phosphoserine. Positions 264–291 are enriched in basic and acidic residues; that stretch reads LEEHTVQTLKEQADHLLQKEDSHIGKEE. Phosphoserine occurs at positions 322, 324, and 345. Basic and acidic residues-rich tracts occupy residues 336-401, 422-433, 440-468, and 510-528; these read RSHD…ERDR, RSERSHYYDSER, PYRERTRYSRPYTDNRARESSDSEDEYKK, and YTSKLERESKRTSEHETIK. Lys-360 participates in a covalent cross-link: Glycyl lysine isopeptide (Lys-Gly) (interchain with G-Cter in SUMO2). At Ser-423 the chain carries Phosphoserine. Residues Ser-532, Ser-614, and Ser-624 each carry the phosphoserine modification. The span at 613 to 625 shows a compositional bias: polar residues; it reads GSPTPSNQLNDSP. Thr-626 carries the post-translational modification Phosphothreonine. Ser-633 carries the post-translational modification Phosphoserine. A Glycyl lysine isopeptide (Lys-Gly) (interchain with G-Cter in SUMO2) cross-link involves residue Lys-637. A phosphoserine mark is found at Ser-697, Ser-707, Ser-743, and Ser-753. The tract at residues 729–749 is disordered; that stretch reads RDSDDTCRQHNTSKSPFREME. Lys-775 is covalently cross-linked (Glycyl lysine isopeptide (Lys-Gly) (interchain with G-Cter in SUMO2)). Disordered stretches follow at residues 829-894, 941-974, 1015-1078, and 1135-1185; these read CDNR…PTLD, QEAQEEGNSILHERRGRPEIPLDEEQRGHTHISD, EDYS…HYSD, and AHAQ…EDLP. The span at 830–847 shows a compositional bias: basic and acidic residues; it reads DNREPTDRHSENTCDEYK. The segment covering 849 to 858 has biased composition (polar residues); that stretch reads SIGSTSSASH. The segment covering 867-883 has biased composition (low complexity); the sequence is PIGSSGISSLQSPPSGI. Residues 951–974 show a composition bias toward basic and acidic residues; sequence LHERRGRPEIPLDEEQRGHTHISD. The span at 1026 to 1037 shows a compositional bias: acidic residues; the sequence is DESDSEDTESDD. Ser-1077 carries the phosphoserine modification. Residues 1150-1165 show a composition bias toward basic and acidic residues; sequence SRSDHLGHLNPEDTLR. At Ser-1201 the chain carries Phosphoserine. Disordered stretches follow at residues 1232 to 1254, 1280 to 1346, and 1366 to 1396; these read GWDFSQQERPTTTYQQPDSSYGT, WDPR…APEI, and NFEKNDIKERGPPKKRRQELESDSESDGELQ. Composition is skewed to polar residues over residues 1235–1254 and 1319–1329; these read FSQQERPTTTYQQPDSSYGT and RSGSHFSSPSN. Basic and acidic residues predominate over residues 1366 to 1377; sequence NFEKNDIKERGP. A phosphoserine mark is found at Ser-1387, Ser-1389, and Ser-1391. Residues 1392 to 1688 form an interaction with TUBA1A region; sequence DGELQARKKV…KKERSRKKDS (297 aa). Residues 1468-1522 form the AWS domain; the sequence is IKRMQCECTPLSKDERAQGEVACGEDCLNRLLMIECSSRCPNGDYCSNRRFQRKQ. Zn(2+)-binding residues include Cys-1473, Cys-1475, Cys-1490, Cys-1494, Cys-1503, Cys-1507, and Cys-1513. The region spanning 1524–1641 is the SET domain; sequence ADVEVILTEK…SGSELTFDYQ (118 aa). Residues 1534–1536, 1577–1579, and 1602–1603 contribute to the S-adenosyl-L-methionine site; these read KGW, HYY, and NH. Residue Cys-1605 coordinates Zn(2+). One can recognise a Post-SET domain in the interval 1648 to 1664; that stretch reads EAQKCFCGSANCRGYLG. Gln-1650 is a binding site for S-adenosyl-L-methionine. Cys-1652 contacts Zn(2+). Phe-1653 is a binding site for S-adenosyl-L-methionine. Cys-1654 and Cys-1659 together coordinate Zn(2+). 3 positions are modified to phosphoserine: Ser-1670, Ser-1818, and Ser-1819. The disordered stretch occupies residues 1806–1848; sequence TAVPQLSEGDGYSSENTSRAHTPLNTPDPSAKPSTEMDTDTPK. Over residues 1818–1833 the composition is skewed to polar residues; the sequence is SSENTSRAHTPLNTPD. Phosphothreonine is present on residues Thr-1827 and Thr-1846. Phosphoserine occurs at positions 1862 and 1926. 2 disordered regions span residues 1914–1981 and 1993–2110; these read SEAT…DISD and LKEV…AQKQ. Residues 1934–1946 show a composition bias toward basic and acidic residues; the sequence is TEPKDSNGTKLEE. Residues 1947–1964 show a composition bias toward acidic residues; sequence TIAEETPSQDEEEGVSDV. Residues Ser-1954, Ser-1962, and Ser-1969 each carry the phosphoserine modification. Basic and acidic residues-rich tracts occupy residues 1965–1978, 1993–2020, and 2032–2045; these read ESERSQEPPDKTVD, LKEVYRIPKKSQTEKESTVAERGRDAAA, and RSRERDPDKQSQNK. Ser-2053 and Ser-2055 each carry phosphoserine. 2 stretches are compositionally biased toward basic and acidic residues: residues 2063–2073 and 2084–2108; these read RGTKRPDDRYD and KDRNKLSTEERRKLFEQEVAQREAQ. Positions 2090 to 2119 form a coiled coil; that stretch reads STEERRKLFEQEVAQREAQKQQQQMQNLGM. A low charge region region spans residues 2110–2339; the sequence is QQQQMQNLGM…APGQPQSLQP (230 aa). In terms of domain architecture, WW spans 2362-2395; it reads IVLPPNWKTARDPEGKIYYYHVITRQTQWDPPTW. Residues 2412–2438 are disordered; the sequence is LGTPTYDENPMKTSKKPKTAEADTSSE. The interval 2430–2537 is interaction with POLR2A; sequence TAEADTSSEL…YKPKEDTELE (108 aa).

It belongs to the class V-like SAM-binding methyltransferase superfamily. Histone-lysine methyltransferase family. SET2 subfamily. In terms of assembly, specifically interacts with hyperphosphorylated C-terminal domain (CTD) of RNA polymerase II large subunit (POLR2A): binds to CTD heptad repeats doubly phosphorylated on 'Ser-2' and 'Ser-5' of each heptad. Interacts with HTT. Interacts with IWS1. Interacts with p53/TP53; leading to regulate p53/TP53 target genes. Component of a complex with HNRNPL. Interacts with TUBA1A; the interaction is independent on alpha-tubulin acetylation on 'Lys-40'. May be automethylated.

The protein resides in the nucleus. Its subcellular location is the chromosome. It carries out the reaction L-lysyl(36)-[histone H3] + 3 S-adenosyl-L-methionine = N(6),N(6),N(6)-trimethyl-L-lysyl(36)-[histone H3] + 3 S-adenosyl-L-homocysteine + 3 H(+). The enzyme catalyses L-lysyl-[protein] + S-adenosyl-L-methionine = N(6)-methyl-L-lysyl-[protein] + S-adenosyl-L-homocysteine + H(+). The catalysed reaction is L-lysyl-[protein] + 3 S-adenosyl-L-methionine = N(6),N(6),N(6)-trimethyl-L-lysyl-[protein] + 3 S-adenosyl-L-homocysteine + 3 H(+). Its activity is regulated as follows. Specifically inhibited by sinefungin derivatives. Histone methyltransferase that specifically trimethylates 'Lys-36' of histone H3 (H3K36me3) using dimethylated 'Lys-36' (H3K36me2) as substrate. It is capable of trimethylating unmethylated H3K36 (H3K36me0) in vitro. Represents the main enzyme generating H3K36me3, a specific tag for epigenetic transcriptional activation. Plays a role in chromatin structure modulation during elongation by coordinating recruitment of the FACT complex and by interacting with hyperphosphorylated POLR2A. Acts as a key regulator of DNA mismatch repair in G1 and early S phase by generating H3K36me3, a mark required to recruit MSH6 subunit of the MutS alpha complex: early recruitment of the MutS alpha complex to chromatin to be replicated allows a quick identification of mismatch DNA to initiate the mismatch repair reaction. Required for DNA double-strand break repair in response to DNA damage: acts by mediating formation of H3K36me3, promoting recruitment of RAD51 and DNA repair via homologous recombination (HR). Acts as a tumor suppressor. H3K36me3 also plays an essential role in the maintenance of a heterochromatic state, by recruiting DNA methyltransferase DNMT3A. H3K36me3 is also enhanced in intron-containing genes, suggesting that SETD2 recruitment is enhanced by splicing and that splicing is coupled to recruitment of elongating RNA polymerase. Required during angiogenesis. Required for endoderm development by promoting embryonic stem cell differentiation toward endoderm: acts by mediating formation of H3K36me3 in distal promoter regions of FGFR3, leading to regulate transcription initiation of FGFR3. In addition to histones, also mediates methylation of other proteins, such as tubulins and STAT1. Trimethylates 'Lys-40' of alpha-tubulins such as TUBA1B (alpha-TubK40me3); alpha-TubK40me3 is required for normal mitosis and cytokinesis and may be a specific tag in cytoskeletal remodeling. Involved in interferon-alpha-induced antiviral defense by mediating both monomethylation of STAT1 at 'Lys-525' and catalyzing H3K36me3 on promoters of some interferon-stimulated genes (ISGs) to activate gene transcription. This is Histone-lysine N-methyltransferase SETD2 from Mus musculus (Mouse).